Here is a 415-residue protein sequence, read N- to C-terminus: MHNLIKDLKARNLINNITNEEKLKKALAENKGIYVGFDPSADSLHLGNYIMIMLLKRFRLHNIKTFALVGGATGMIGDPSGKSAERNLLDKTILEHNITKIKYQLEKFTNSQVINNYDFYKNMTFLDFLRDVGKLININYLLEKEIISSRLDVGISYTEFSYNLLQGYDFLQLYKNDNIAIQAGGSDQWGNITTGIEIIRKSLGDDNIACGLTINLLTNSEGKKFGKSEKGAIYLDENKSSVYEMYQFLINQTDADVEKLLNFLTLIDVDEINKIMQAHKENPALRIAQKALAQAVVVDVHGQQKYEQALHISQVLFNGNINELNQEEFNIAIKSLPTTKLDKDEIKIIDLLNLANISSSNRVARDFLSTGSILVNDIKVNDENFLVKKQDAINQEFSIIKKGKRNYFLIVWNKD.

Tyr-34 provides a ligand contact to L-tyrosine. Positions 39–48 (PSADSLHLGN) match the 'HIGH' region motif. Positions 162 and 166 each coordinate L-tyrosine. Positions 224–228 (KFGKS) match the 'KMSKS' region motif. Lys-227 contributes to the ATP binding site. One can recognise an S4 RNA-binding domain in the interval 346–413 (IKIIDLLNLA…KRNYFLIVWN (68 aa)).

Belongs to the class-I aminoacyl-tRNA synthetase family. TyrS type 1 subfamily. As to quaternary structure, homodimer.

It localises to the cytoplasm. The enzyme catalyses tRNA(Tyr) + L-tyrosine + ATP = L-tyrosyl-tRNA(Tyr) + AMP + diphosphate + H(+). Its function is as follows. Catalyzes the attachment of tyrosine to tRNA(Tyr) in a two-step reaction: tyrosine is first activated by ATP to form Tyr-AMP and then transferred to the acceptor end of tRNA(Tyr). The polypeptide is Tyrosine--tRNA ligase (Ureaplasma urealyticum serovar 10 (strain ATCC 33699 / Western)).